Here is a 277-residue protein sequence, read N- to C-terminus: Undecaprenyl-diphosphatase (277 aa).

8 consecutive transmembrane segments (helical) span residues 1-21 (MDIIQAIIIGIVQGLTEFLPV), 38-58 (SSLAFDVFLHLGSLIAVLWFF), 93-113 (LVWYVIIATIPVGLVGVLFES), 118-138 (LFAGALYVPAFFLFVTGTILY), 168-188 (AILPGLSRSGTTIAAGLVIGL), 191-211 (EFAAKFSFILSIPAILGAFVV), 222-242 (FNALAILFGFLAALISGYLAI), and 256-276 (IFAYYCWIVGIIVFMGSITHL).

It belongs to the UppP family.

The protein localises to the cell membrane. The catalysed reaction is di-trans,octa-cis-undecaprenyl diphosphate + H2O = di-trans,octa-cis-undecaprenyl phosphate + phosphate + H(+). Catalyzes the dephosphorylation of undecaprenyl diphosphate (UPP). The chain is Undecaprenyl-diphosphatase from Methanobrevibacter smithii (strain ATCC 35061 / DSM 861 / OCM 144 / PS).